Reading from the N-terminus, the 901-residue chain is Protein translocase subunit SecA (901 aa).

ATP contacts are provided by residues Gln89, 107-111, and Asp502; that span reads GEGKT. The disordered stretch occupies residues 838 to 883; the sequence is YQQQQAETEAQMHPEHEEAEGGEVSGRVAGFDETDPTTWGNPSRND. The Zn(2+) site is built by Cys885, Cys887, Cys896, and His897.

The protein belongs to the SecA family. In terms of assembly, monomer and homodimer. Part of the essential Sec protein translocation apparatus which comprises SecA, SecYEG and auxiliary proteins SecDF-YajC and YidC. The cofactor is Zn(2+).

It is found in the cell inner membrane. Its subcellular location is the cytoplasm. The catalysed reaction is ATP + H2O + cellular proteinSide 1 = ADP + phosphate + cellular proteinSide 2.. Its function is as follows. Part of the Sec protein translocase complex. Interacts with the SecYEG preprotein conducting channel. Has a central role in coupling the hydrolysis of ATP to the transfer of proteins into and across the cell membrane, serving both as a receptor for the preprotein-SecB complex and as an ATP-driven molecular motor driving the stepwise translocation of polypeptide chains across the membrane. The sequence is that of Protein translocase subunit SecA from Paracoccus denitrificans (strain Pd 1222).